A 122-amino-acid chain; its full sequence is Ribosome-binding factor A (122 aa).

This sequence belongs to the RbfA family. As to quaternary structure, monomer. Binds 30S ribosomal subunits, but not 50S ribosomal subunits or 70S ribosomes.

Its subcellular location is the cytoplasm. In terms of biological role, one of several proteins that assist in the late maturation steps of the functional core of the 30S ribosomal subunit. Associates with free 30S ribosomal subunits (but not with 30S subunits that are part of 70S ribosomes or polysomes). Required for efficient processing of 16S rRNA. May interact with the 5'-terminal helix region of 16S rRNA. This chain is Ribosome-binding factor A, found in Anaeromyxobacter sp. (strain Fw109-5).